Here is a 97-residue protein sequence, read N- to C-terminus: Large ribosomal subunit protein uL23 (97 aa).

It belongs to the universal ribosomal protein uL23 family. As to quaternary structure, part of the 50S ribosomal subunit. Contacts protein L29, and trigger factor when it is bound to the ribosome.

In terms of biological role, one of the early assembly proteins it binds 23S rRNA. One of the proteins that surrounds the polypeptide exit tunnel on the outside of the ribosome. Forms the main docking site for trigger factor binding to the ribosome. The chain is Large ribosomal subunit protein uL23 from Methylococcus capsulatus (strain ATCC 33009 / NCIMB 11132 / Bath).